Reading from the N-terminus, the 353-residue chain is N-acetyl-gamma-glutamyl-phosphate reductase (353 aa).

Residue Cys157 is part of the active site.

Belongs to the NAGSA dehydrogenase family. Type 1 subfamily.

It localises to the cytoplasm. The enzyme catalyses N-acetyl-L-glutamate 5-semialdehyde + phosphate + NADP(+) = N-acetyl-L-glutamyl 5-phosphate + NADPH + H(+). Its pathway is amino-acid biosynthesis; L-arginine biosynthesis; N(2)-acetyl-L-ornithine from L-glutamate: step 3/4. Its function is as follows. Catalyzes the NADPH-dependent reduction of N-acetyl-5-glutamyl phosphate to yield N-acetyl-L-glutamate 5-semialdehyde. The sequence is that of N-acetyl-gamma-glutamyl-phosphate reductase from Bordetella avium (strain 197N).